Reading from the N-terminus, the 303-residue chain is HTH-type transcriptional regulator LysG (303 aa).

The HTH lysR-type domain maps to 6 to 62; sequence LDGPQLAALAAVVELGSFDAAAERLHVTPSAVSQRIKSLEQQVGQVLVVREKPCRAT. A DNA-binding region (H-T-H motif) is located at residues 23 to 42; that stretch reads FDAAAERLHVTPSAVSQRIK.

This sequence belongs to the LysR transcriptional regulatory family. Homodimer.

In terms of biological role, positively regulates the expression of the exporter LysE and represses its own expression. This chain is HTH-type transcriptional regulator LysG, found in Mycobacterium bovis (strain ATCC BAA-935 / AF2122/97).